Reading from the N-terminus, the 552-residue chain is Elongator complex protein 3 (552 aa).

The 291-residue stretch at 84–374 (RTASGIAVVA…YRVQRDIPMP (291 aa)) folds into the Radical SAM core domain. 3 residues coordinate [4Fe-4S] cluster: Cys-101, Cys-111, and Cys-114. Acetyl-CoA contacts are provided by residues Lys-166, 476–479 (ELHV), 499–501 (FGM), and Tyr-532. Residues 398–552 (TTCRDVRTRE…YMSKSIEENN (155 aa)) form the N-acetyltransferase domain.

Belongs to the ELP3 family. As to quaternary structure, component of the elongator complex composed of Elp1, Elp2, Elp3, Elp4, Elp5 and Elp6. The elongator complex associates with and stabilizes microtubules; efficient interaction requires the full complex. The cofactor is [4Fe-4S] cluster.

Its subcellular location is the cytoplasm. The protein localises to the nucleus. It is found in the cytoskeleton. It localises to the spindle. The catalysed reaction is uridine(34) in tRNA + acetyl-CoA + S-adenosyl-L-methionine + H2O = 5-(carboxymethyl)uridine(34) in tRNA + 5'-deoxyadenosine + L-methionine + CoA + 2 H(+). The protein operates within tRNA modification; 5-methoxycarbonylmethyl-2-thiouridine-tRNA biosynthesis. In terms of biological role, catalytic tRNA acetyltransferase subunit of the elongator complex, which is required for multiple tRNA modifications, including mcm5U (5-methoxycarbonylmethyl uridine), mcm5s2U (5-methoxycarbonylmethyl-2-thiouridine), and ncm5U (5-carbamoylmethyl uridine). In the elongator complex, acts as a tRNA uridine(34) acetyltransferase by mediating formation of carboxymethyluridine in the wobble base at position 34 in tRNAs. Binding by the elongator complex stabilizes microtubules and promotes their growth. This induces central spindle asymmetry, promoting polarized signaling endosome trafficking during asymmetric cell division and cell fate assignation of sensory organ precursor cells. Plays a role in the control of synaptic bouton expansion. Required for larval development. Involved in protein synthesis-dependent long-term memory formation, probably as part of the elongator complex. This Drosophila melanogaster (Fruit fly) protein is Elongator complex protein 3.